The primary structure comprises 350 residues: Biotin synthase (350 aa).

The Radical SAM core domain occupies 38-256 (NYVQVSTLLS…IAVARIMMPE (219 aa)). [4Fe-4S] cluster is bound by residues Cys-53, Cys-57, and Cys-60. Positions 97, 128, 188, and 260 each coordinate [2Fe-2S] cluster.

It belongs to the radical SAM superfamily. Biotin synthase family. In terms of assembly, homodimer. Requires [4Fe-4S] cluster as cofactor. It depends on [2Fe-2S] cluster as a cofactor.

It catalyses the reaction (4R,5S)-dethiobiotin + (sulfur carrier)-SH + 2 reduced [2Fe-2S]-[ferredoxin] + 2 S-adenosyl-L-methionine = (sulfur carrier)-H + biotin + 2 5'-deoxyadenosine + 2 L-methionine + 2 oxidized [2Fe-2S]-[ferredoxin]. It functions in the pathway cofactor biosynthesis; biotin biosynthesis; biotin from 7,8-diaminononanoate: step 2/2. Catalyzes the conversion of dethiobiotin (DTB) to biotin by the insertion of a sulfur atom into dethiobiotin via a radical-based mechanism. This Aliivibrio salmonicida (strain LFI1238) (Vibrio salmonicida (strain LFI1238)) protein is Biotin synthase.